The chain runs to 445 residues: Tubulin beta-2B chain (445 aa).

Positions 1–4 (MREI) match the MREI motif motif. Glutamine 11 is a binding site for GTP. At serine 40 the chain carries Phosphoserine. At threonine 55 the chain carries Phosphothreonine. An N6-acetyllysine; alternate modification is found at lysine 58. Residue lysine 58 is modified to N6-succinyllysine; alternate. Lysine 58 participates in a covalent cross-link: Glycyl lysine isopeptide (Lys-Gly) (interchain with G-Cter in ubiquitin); alternate. 5 residues coordinate GTP: glutamate 69, serine 138, glycine 142, threonine 143, and glycine 144. Residue glutamate 69 participates in Mg(2+) binding. Serine 172 is modified (phosphoserine; by CDK1). Residues asparagine 204 and asparagine 226 each contribute to the GTP site. Residues threonine 285 and threonine 290 each carry the phosphothreonine modification. Omega-N-methylarginine is present on arginine 318. Lysine 324 is covalently cross-linked (Glycyl lysine isopeptide (Lys-Gly) (interchain with G-Cter in ubiquitin)). Residues 422-445 (YQQYQDATADEQGEFEEEEGEDEA) form a disordered region. Residues 429–445 (TADEQGEFEEEEGEDEA) show a composition bias toward acidic residues. Glutamate 438 is subject to 5-glutamyl polyglutamate.

It belongs to the tubulin family. As to quaternary structure, dimer of alpha and beta chains. A typical microtubule is a hollow water-filled tube with an outer diameter of 25 nm and an inner diameter of 15 nM. Alpha-beta heterodimers associate head-to-tail to form protofilaments running lengthwise along the microtubule wall with the beta-tubulin subunit facing the microtubule plus end conferring a structural polarity. Microtubules usually have 13 protofilaments but different protofilament numbers can be found in some organisms and specialized cells. The cofactor is Mg(2+). Some glutamate residues at the C-terminus are polyglycylated, resulting in polyglycine chains on the gamma-carboxyl group. Glycylation is mainly limited to tubulin incorporated into axonemes (cilia and flagella) whereas glutamylation is prevalent in neuronal cells, centrioles, axonemes, and the mitotic spindle. Both modifications can coexist on the same protein on adjacent residues, and lowering polyglycylation levels increases polyglutamylation, and reciprocally. The precise function of polyglycylation is still unclear. In terms of processing, some glutamate residues at the C-terminus are polyglutamylated, resulting in polyglutamate chains on the gamma-carboxyl group. Polyglutamylation plays a key role in microtubule severing by spastin (SPAST). SPAST preferentially recognizes and acts on microtubules decorated with short polyglutamate tails: severing activity by SPAST increases as the number of glutamates per tubulin rises from one to eight, but decreases beyond this glutamylation threshold. Post-translationally, phosphorylated on Ser-172 by CDK1 during the cell cycle, from metaphase to telophase, but not in interphase. This phosphorylation inhibits tubulin incorporation into microtubules.

It localises to the cytoplasm. Its subcellular location is the cytoskeleton. Its function is as follows. Tubulin is the major constituent of microtubules, a cylinder consisting of laterally associated linear protofilaments composed of alpha- and beta-tubulin heterodimers. Microtubules grow by the addition of GTP-tubulin dimers to the microtubule end, where a stabilizing cap forms. Below the cap, tubulin dimers are in GDP-bound state, owing to GTPase activity of alpha-tubulin. Implicated in neuronal migration. In Bos taurus (Bovine), this protein is Tubulin beta-2B chain (TUBB2B).